The chain runs to 171 residues: UPF0303 protein YPK_1581 (171 aa).

The protein belongs to the UPF0303 family.

The chain is UPF0303 protein YPK_1581 from Yersinia pseudotuberculosis serotype O:3 (strain YPIII).